The sequence spans 534 residues: Bifunctional purine biosynthesis protein PurH (534 aa).

Residues 1–148 (MNTVRPIRRA…KNHQDVTIVV (148 aa)) enclose the MGS-like domain.

Belongs to the PurH family.

The catalysed reaction is (6R)-10-formyltetrahydrofolate + 5-amino-1-(5-phospho-beta-D-ribosyl)imidazole-4-carboxamide = 5-formamido-1-(5-phospho-D-ribosyl)imidazole-4-carboxamide + (6S)-5,6,7,8-tetrahydrofolate. It carries out the reaction IMP + H2O = 5-formamido-1-(5-phospho-D-ribosyl)imidazole-4-carboxamide. Its pathway is purine metabolism; IMP biosynthesis via de novo pathway; 5-formamido-1-(5-phospho-D-ribosyl)imidazole-4-carboxamide from 5-amino-1-(5-phospho-D-ribosyl)imidazole-4-carboxamide (10-formyl THF route): step 1/1. It participates in purine metabolism; IMP biosynthesis via de novo pathway; IMP from 5-formamido-1-(5-phospho-D-ribosyl)imidazole-4-carboxamide: step 1/1. This chain is Bifunctional purine biosynthesis protein PurH, found in Shewanella denitrificans (strain OS217 / ATCC BAA-1090 / DSM 15013).